We begin with the raw amino-acid sequence, 337 residues long: Inositol 2-dehydrogenase (337 aa).

The protein belongs to the Gfo/Idh/MocA family. As to quaternary structure, homotetramer.

It catalyses the reaction myo-inositol + NAD(+) = scyllo-inosose + NADH + H(+). In terms of biological role, involved in the oxidation of myo-inositol (MI) to 2-keto-myo-inositol (2KMI or 2-inosose). This chain is Inositol 2-dehydrogenase, found in Klebsiella pneumoniae subsp. pneumoniae (strain ATCC 700721 / MGH 78578).